The primary structure comprises 647 residues: Macrolide export ATP-binding/permease protein MacB 2 (647 aa).

Positions Ile-6–Lys-244 constitute an ABC transporter domain. Gly-42–Ser-49 lines the ATP pocket. Residues Gln-223–Val-247 are disordered. The span at Pro-230–Ala-242 shows a compositional bias: low complexity. A run of 4 helical transmembrane segments spans residues Phe-273–Gly-293, Ile-527–Val-547, Leu-581–Val-601, and Leu-610–Leu-630.

It belongs to the ABC transporter superfamily. Macrolide exporter (TC 3.A.1.122) family. As to quaternary structure, homodimer. Part of the tripartite efflux system MacAB-TolC, which is composed of an inner membrane transporter, MacB, a periplasmic membrane fusion protein, MacA, and an outer membrane component, TolC. The complex forms a large protein conduit and can translocate molecules across both the inner and outer membranes. Interacts with MacA.

The protein resides in the cell inner membrane. Its function is as follows. Part of the tripartite efflux system MacAB-TolC. MacB is a non-canonical ABC transporter that contains transmembrane domains (TMD), which form a pore in the inner membrane, and an ATP-binding domain (NBD), which is responsible for energy generation. Confers resistance against macrolides. The polypeptide is Macrolide export ATP-binding/permease protein MacB 2 (Aeromonas hydrophila subsp. hydrophila (strain ATCC 7966 / DSM 30187 / BCRC 13018 / CCUG 14551 / JCM 1027 / KCTC 2358 / NCIMB 9240 / NCTC 8049)).